We begin with the raw amino-acid sequence, 1423 residues long: Protein phosphatase Slingshot homolog 2 (1423 aa).

Residues 1–37 form a disordered region; it reads MALVTVQRSPTPSTTSSPCASEADSGEEECRSQPRSI. Residues 9 to 18 are compositionally biased toward low complexity; it reads SPTPSTTSSP. Residues Ser17, Ser25, and Ser36 each carry the phosphoserine modification. The region spanning 248–303 is the DEK-C domain; the sequence is ERTERLIKTKLREIMMQKDLENITSKEIRTELEMQMVCNLREFKEFIDNEMIVILG. Residues 307–448 enclose the Tyrosine-protein phosphatase domain; that stretch reads SPTQIFEHVF…LEEYQGILLA (142 aa). Cys392 acts as the Phosphocysteine intermediate in catalysis. Phosphoserine is present on residues Ser461, Ser487, Ser534, Ser631, and Ser633. Disordered regions lie at residues 617 to 641, 664 to 684, 696 to 728, 797 to 825, 840 to 862, 877 to 954, 962 to 981, 1019 to 1041, 1070 to 1108, and 1144 to 1179; these read TSPL…CQTE, QETR…GGRN, PSKV…QSKA, ENKP…MCNP, EGEP…AKWY, LRQE…NATV, FDHL…TQQE, TSPN…EQGL, SLHP…SSLS, and TEQS…YKDS. A compositionally biased stretch (pro residues) spans 621–635; that stretch reads KDPPMSPDPESPSPQ. Residues 664-680 are compositionally biased toward basic and acidic residues; sequence QETRSRSFSHSRMEELG. The span at 889-904 shows a compositional bias: polar residues; sequence TCTSLSTRKNSKNDSS. A compositionally biased stretch (basic and acidic residues) spans 910 to 932; that stretch reads PKGKSDEAPPEHSFVLKEPEMSK. A compositionally biased stretch (polar residues) spans 941 to 953; sequence EAGSLSHSEQNAT. Residues 1019–1034 are compositionally biased toward polar residues; that stretch reads TSPNHTGPGSEIATSE. Positions 1144-1172 are enriched in polar residues; the sequence is TEQSSTTDEPSAEQVSWEESQESPLSSGS. Residue Ser1217 is modified to Phosphoserine. Thr1422 is modified (phosphothreonine).

The protein belongs to the protein-tyrosine phosphatase family. In terms of assembly, interacts with filamentous actin.

The protein resides in the cytoplasm. It localises to the cytoskeleton. Its subcellular location is the cell junction. The protein localises to the focal adhesion. It is found in the cytoplasmic vesicle. The protein resides in the secretory vesicle. It localises to the acrosome. It carries out the reaction O-phospho-L-tyrosyl-[protein] + H2O = L-tyrosyl-[protein] + phosphate. It catalyses the reaction O-phospho-L-seryl-[protein] + H2O = L-seryl-[protein] + phosphate. The catalysed reaction is O-phospho-L-threonyl-[protein] + H2O = L-threonyl-[protein] + phosphate. Its function is as follows. Protein phosphatase which regulates actin filament dynamics. Dephosphorylates and activates the actin binding/depolymerizing factor cofilin, which subsequently binds to actin filaments and stimulates their disassembly. Inhibitory phosphorylation of cofilin is mediated by LIMK1, which may also be dephosphorylated and inactivated by this protein. Required for spermatogenesis. Involved in acrosome biogenesis, probably by regulating cofilin-mediated actin cytoskeleton remodeling during proacrosomal vesicle fusion and/or Golgi to perinuclear vesicle trafficking. This Homo sapiens (Human) protein is Protein phosphatase Slingshot homolog 2 (SSH2).